Reading from the N-terminus, the 147-residue chain is Thyrotropin subunit beta (147 aa).

The first 20 residues, 1 to 20 (MELSVAMYGLLCLLFSQAVP), serve as a signal peptide directing secretion. 6 disulfide bridges follow: Cys-22-Cys-72, Cys-36-Cys-87, Cys-39-Cys-127, Cys-47-Cys-103, Cys-51-Cys-105, and Cys-108-Cys-115. Asn-43 is a glycosylation site (N-linked (GlcNAc...) asparagine).

It belongs to the glycoprotein hormones subunit beta family. Heterodimer of a common alpha chain and a unique beta chain which confers biological specificity to thyrotropin, lutropin, follitropin and gonadotropin. In terms of tissue distribution, pituitary gland. Higher levels seen in immature fishes than the mature fishes.

The protein resides in the secreted. Functionally, indispensable for the control of thyroid structure and metabolism. May play some role in the biological processes of the immature fishes. This is Thyrotropin subunit beta (tshb) from Oncorhynchus mykiss (Rainbow trout).